The sequence spans 178 residues: Caveolin-1 (178 aa).

N-acetylserine is present on S2. S2 carries the phosphoserine modification. The required for homooligomerization stretch occupies residues 2-94 (SGGKYVDSEG…WKASFTTFTV (93 aa)). The Cytoplasmic portion of the chain corresponds to 2 to 104 (SGGKYVDSEG…TKYWFYRLLS (103 aa)). An N6-acetyllysine; alternate modification is found at K5. K5 participates in a covalent cross-link: Glycyl lysine isopeptide (Lys-Gly) (interchain with G-Cter in ubiquitin); alternate. Y6 carries the phosphotyrosine modification. Phosphoserine is present on S9. Y14 is subject to Phosphotyrosine; by ABL1. Y25 bears the Phosphotyrosine mark. Glycyl lysine isopeptide (Lys-Gly) (interchain with G-Cter in ubiquitin) cross-links involve residues K26, K30, K39, K47, and K57. Residues 82 to 94 (DGIWKASFTTFTV) are interaction with CAVIN3. The segment at residues 105-125 (ALFGIPMALIWGIYFAILSFL) is an intramembrane region (helical). The Cytoplasmic segment spans residues 126–178 (HIWAVVPCIKSFLIEIQCISRVYSIYVHTFCDPLFEAIGKIFSNIRINTQKEI). Residues 131-142 (VPCIKSFLIEIQ) form an interacts with SPRY1, SPRY2, SPRY3 and SPRY4 region. 3 S-palmitoyl cysteine lipidation sites follow: C133, C143, and C156. Positions 149-160 (SIYVHTFCDPLF) are interacts with SPRY1, SPRY2, and SPRY4. Residues 167 to 178 (FSNIRINTQKEI) are interacts with SPRY1, SPRY2, SPRY3 and SPRY4.

This sequence belongs to the caveolin family. Homooligomer. Interacts with GLIPR2. Interacts with NOSTRIN. Interacts with SNAP25 and STX1A. Interacts (via the N-terminus) with DPP4; the interaction is direct. Interacts with CTNNB1, CDH1 and JUP. Interacts with PACSIN2; this interaction induces membrane tubulation. Interacts with SLC7A9. Interacts with BMX and BTK. Interacts with TGFBR1. Interacts with CAVIN3 (via leucine-zipper domain) in a cholesterol-sensitive manner. Interacts with CAVIN1. Interacts with EHD2 in a cholesterol-dependent manner. Forms a ternary complex with UBXN6 and VCP; mediates CAV1 targeting to lysosomes for degradation. Interacts with ABCG1; this interaction regulates ABCG1-mediated cholesterol efflux. Interacts with NEU3; this interaction enhances NEU3 sialidase activity within caveola. Interacts (via C-terminus) with SPRY1, SPRY2 (via C-terminus), SPRY3, and SPRY4. Interacts with IGFBP5; this interaction allows trafficking of IGFBP5 from the plasma membrane to the nucleus. Phosphorylated at Tyr-14 by ABL1 in response to oxidative stress. In terms of processing, ubiquitinated. Undergo monoubiquitination and multi- and/or polyubiquitination. Monoubiquitination of N-terminal lysines promotes integration in a ternary complex with UBXN6 and VCP which promotes oligomeric CAV1 targeting to lysosomes for degradation. Ubiquitinated by ZNRF1; leading to degradation and modulation of the TLR4-mediated immune response.

The protein localises to the golgi apparatus membrane. Its subcellular location is the cell membrane. It is found in the membrane. It localises to the caveola. The protein resides in the membrane raft. May act as a scaffolding protein within caveolar membranes. Forms a stable heterooligomeric complex with CAV2 that targets to lipid rafts and drives caveolae formation. Mediates the recruitment of CAVIN proteins (CAVIN1/2/3/4) to the caveolae. Interacts directly with G-protein alpha subunits and can functionally regulate their activity. Involved in the costimulatory signal essential for T-cell receptor (TCR)-mediated T-cell activation. Its binding to DPP4 induces T-cell proliferation and NF-kappa-B activation in a T-cell receptor/CD3-dependent manner. Recruits CTNNB1 to caveolar membranes and may regulate CTNNB1-mediated signaling through the Wnt pathway. Negatively regulates TGFB1-mediated activation of SMAD2/3 by mediating the internalization of TGFBR1 from membrane rafts leading to its subsequent degradation. Binds 20(S)-hydroxycholesterol (20(S)-OHC). This chain is Caveolin-1 (CAV1), found in Bos taurus (Bovine).